A 231-amino-acid polypeptide reads, in one-letter code: Putative N-acetylmannosamine-6-phosphate 2-epimerase (231 aa).

Belongs to the NanE family.

The catalysed reaction is an N-acyl-D-glucosamine 6-phosphate = an N-acyl-D-mannosamine 6-phosphate. The protein operates within amino-sugar metabolism; N-acetylneuraminate degradation; D-fructose 6-phosphate from N-acetylneuraminate: step 3/5. Functionally, converts N-acetylmannosamine-6-phosphate (ManNAc-6-P) to N-acetylglucosamine-6-phosphate (GlcNAc-6-P). The polypeptide is Putative N-acetylmannosamine-6-phosphate 2-epimerase (Listeria monocytogenes serotype 4b (strain F2365)).